The sequence spans 186 residues: MTIADIKKNTEAKMDQSIVAFKNNLAKIRTGRANPALLDSVQVEYYGSMVPLSQVANVSLIDARTISVQPWEKGMGAKIEKAIRESELGLNPASMGDLIRVPMPPMSEERRKEMTKLARNEGEGAKVAVRNLRRDANESVKKLVKDKLASEDEQKRAEADIQKVTDKHIAEVDALVAAKEQEIMAV.

Belongs to the RRF family.

Its subcellular location is the cytoplasm. In terms of biological role, responsible for the release of ribosomes from messenger RNA at the termination of protein biosynthesis. May increase the efficiency of translation by recycling ribosomes from one round of translation to another. The sequence is that of Ribosome-recycling factor from Paracidovorax citrulli (strain AAC00-1) (Acidovorax citrulli).